The chain runs to 246 residues: Breast cancer metastasis-suppressor 1 (246 aa).

Residues 1–57 (MPVQPPSKDTEEMEAEGDSAAEMNGEEEESEEERSGSQTESEEESSEMDDEDYERRR) are disordered. Composition is skewed to acidic residues over residues 11-32 (EEME…ESEE) and 40-52 (ESEE…DDED). Positions 51–98 (EDYERRRSECVSEMLDLEKQFSELKEKLFRERLSQLRLRLEEVGAERA) form a coiled coil. Glycyl lysine isopeptide (Lys-Gly) (interchain with G-Cter in SUMO2) cross-links involve residues K184 and K242.

This sequence belongs to the BRMS1 family. As to quaternary structure, homohexamer (Potential). Interacts with SNX6, HDAC1 and RELA. Interacts with ARID4A. Identified in mSin3A corepressor complexes together with SIN3A, SIN3B, RBBP4, RBBP7, SAP30, SUDS3, ARID4A, HDAC1 and HDAC2. Interacts with SPOP; this recruits the protein to a ubiquitin ligase complex containing SPOP and CUL3. In terms of processing, ubiquitinated by a cullin-RING-based BCR (BTB-CUL3-RBX1) E3 ubiquitin-protein ligase complex containing SPOP, leading to proteasomal degradation. Expression levels are higher in term placentas than in early placentas. Low levels of expression observed in normal pregnancies and in molar pregnancies.

It is found in the nucleus. The protein localises to the cytoplasm. In terms of biological role, transcriptional repressor. Down-regulates transcription activation by NF-kappa-B by promoting the deacetylation of RELA at 'Lys-310'. Promotes HDAC1 binding to promoter regions. Down-regulates expression of anti-apoptotic genes that are controlled by NF-kappa-B. Promotes apoptosis in cells that have inadequate adherence to a substrate, a process called anoikis, and may thereby inhibit metastasis. May be a mediator of metastasis suppression in breast carcinoma. This is Breast cancer metastasis-suppressor 1 (BRMS1) from Homo sapiens (Human).